The sequence spans 346 residues: Nucleoplasmin-like protein ANO39 (346 aa).

The residue at position 2 (S2) is an N-acetylserine. N85 is a glycosylation site (N-linked (GlcNAc...) asparagine). Residues 123–141 (DEEELEEDDEEEEEEDEVE) are compositionally biased toward acidic residues. The tract at residues 123–285 (DEEELEEDDE…KAKAKTDTKL (163 aa)) is disordered. At S145 the chain carries Phosphoserine; by CDC2. Residues 171–180 (AKLDKDADKK) are compositionally biased toward basic and acidic residues. Over residues 181–247 (EDDDEEEDDE…EEEEDEDEES (67 aa)) the composition is skewed to acidic residues. N-linked (GlcNAc...) asparagine glycosylation occurs at N264. The segment covering 271-285 (GDNKPKAKAKTDTKL) has biased composition (basic and acidic residues).

Belongs to the nucleoplasmin family. Post-translationally, phosphorylation occurs in oocytes during the progression of the first meiotic M phase. No phosphorylation is observed in immature oocytes. Expressed specifically in the oocytes of the ovaries.

The protein localises to the nucleus. Its subcellular location is the nucleolus. It is found in the cytoplasm. Its function is as follows. Binds double-stranded RNA and both single-stranded and double-stranded DNA. The protein is Nucleoplasmin-like protein ANO39 of Patiria pectinifera (Starfish).